A 157-amino-acid chain; its full sequence is MRIGHGYDVHRFAEGDFITLGGVRIAHHHGLLAHSDGDVVLHALSDALLGAAALGDIGKHFPDTDPTFKGADSRVLLRHVVGLIHAKGWKVGNVDNTIVAQAPKMAPHIESMRALIAADLQIELDQVNVKATTTEKLGFTGREEGIAVHSVALLLRA.

Residues aspartate 8 and histidine 10 each contribute to the a divalent metal cation site. 4-CDP-2-C-methyl-D-erythritol 2-phosphate contacts are provided by residues 8–10 and 34–35; these read DVH and HS. Histidine 42 lines the a divalent metal cation pocket. Residues 56–58, 61–65, 100–106, 132–135, phenylalanine 139, and arginine 142 contribute to the 4-CDP-2-C-methyl-D-erythritol 2-phosphate site; these read DIG, FPDTD, AQAPKMA, and TTTE.

It belongs to the IspF family. Homotrimer. It depends on a divalent metal cation as a cofactor.

The catalysed reaction is 4-CDP-2-C-methyl-D-erythritol 2-phosphate = 2-C-methyl-D-erythritol 2,4-cyclic diphosphate + CMP. Its pathway is isoprenoid biosynthesis; isopentenyl diphosphate biosynthesis via DXP pathway; isopentenyl diphosphate from 1-deoxy-D-xylulose 5-phosphate: step 4/6. In terms of biological role, involved in the biosynthesis of isopentenyl diphosphate (IPP) and dimethylallyl diphosphate (DMAPP), two major building blocks of isoprenoid compounds. Catalyzes the conversion of 4-diphosphocytidyl-2-C-methyl-D-erythritol 2-phosphate (CDP-ME2P) to 2-C-methyl-D-erythritol 2,4-cyclodiphosphate (ME-CPP) with a corresponding release of cytidine 5-monophosphate (CMP). The protein is 2-C-methyl-D-erythritol 2,4-cyclodiphosphate synthase of Pseudomonas fluorescens (strain SBW25).